Consider the following 583-residue polypeptide: MRKHPQTATKHLFVSGGVASSLGKGLTASSLGQLLTARGLYVTMQKLDPYLNVDPGTMNPFQHGEVFVTEDGAETDLDVGHYERFLDRDLSGSANVTTGQVYSTVIAKERRGEYLGDTVQVIPHITDEIKGRILAMAQPDAQGNRPDVVITEIGGTVGDIESQPFLEAARQVRHDLGRENVFFLHVSLVPYLAPSGELKTKPTQHSVAALRSIGITPDALILRCDRDVPEALKNKIALMCDVDIDGVISTPDAPSIYDIPKVLHREELDAYVVRRLNLPFRDVDWTEWDDLLRRVHEPHETVRIALVGKYVELSDAYLSVTEALRAGGFFHHAKVEMVWVASDDCESASGAAAALGEVHGVLIPGGFGIRGIEGKIGAIHYARTRGLPVLGLCLGLQCIVIEAARAAGLAGANSAEFDPDTPDPVISTMADQVDIVAGAADLGGTMRLGAYPAVLEEDSIVARAYGTTQVSERHRHRYEVNNAYRDKIAESGLRFSGTSPDGHLVEFVEYPPDVHPFIVGTQAHPELKSRPTRPHPLFVAFVGAAMDYKAGELLPVEIPEQSSNGIQHRDSAARPIPEPAARG.

An amidoligase domain region spans residues methionine 1 to leucine 278. Residue serine 20 participates in CTP binding. Serine 20 lines the UTP pocket. ATP-binding positions include serine 21–leucine 26 and aspartate 78. Positions 78 and 152 each coordinate Mg(2+). CTP-binding positions include aspartate 159–glutamate 161, lysine 199–glutamine 204, and lysine 235. UTP contacts are provided by residues lysine 199–glutamine 204 and lysine 235. The region spanning arginine 303 to glycine 551 is the Glutamine amidotransferase type-1 domain. An L-glutamine-binding site is contributed by glycine 366. Residue cysteine 393 is the Nucleophile; for glutamine hydrolysis of the active site. Residues leucine 394–glutamine 397, glutamate 416, and arginine 477 each bind L-glutamine. Residues histidine 524 and glutamate 526 contribute to the active site. The tract at residues glutamate 560 to glycine 583 is disordered.

This sequence belongs to the CTP synthase family. Homotetramer.

It catalyses the reaction UTP + L-glutamine + ATP + H2O = CTP + L-glutamate + ADP + phosphate + 2 H(+). It carries out the reaction L-glutamine + H2O = L-glutamate + NH4(+). The catalysed reaction is UTP + NH4(+) + ATP = CTP + ADP + phosphate + 2 H(+). It participates in pyrimidine metabolism; CTP biosynthesis via de novo pathway; CTP from UDP: step 2/2. Allosterically activated by GTP, when glutamine is the substrate; GTP has no effect on the reaction when ammonia is the substrate. The allosteric effector GTP functions by stabilizing the protein conformation that binds the tetrahedral intermediate(s) formed during glutamine hydrolysis. Inhibited by the product CTP, via allosteric rather than competitive inhibition. Catalyzes the ATP-dependent amination of UTP to CTP with either L-glutamine or ammonia as the source of nitrogen. Regulates intracellular CTP levels through interactions with the four ribonucleotide triphosphates. The polypeptide is CTP synthase (Mycolicibacterium paratuberculosis (strain ATCC BAA-968 / K-10) (Mycobacterium paratuberculosis)).